A 345-amino-acid polypeptide reads, in one-letter code: Twinfilin (345 aa).

ADF-H domains lie at 4 to 139 (QTGI…KHKR) and 177 to 312 (GISC…DELH). The interval 320–345 (PAFAKPKGPPNRGAKRLTRPSNEDQV) is disordered.

This sequence belongs to the actin-binding proteins ADF family. Twinfilin subfamily. As to quaternary structure, interacts with G-actin; ADP-actin form.

It is found in the cytoplasm. Its subcellular location is the cytoskeleton. The protein resides in the cell cortex. Functionally, actin-binding protein involved in motile and morphological processes. Inhibits actin polymerization, likely by sequestering G-actin. The sequence is that of Twinfilin (twf) from Drosophila pseudoobscura pseudoobscura (Fruit fly).